We begin with the raw amino-acid sequence, 308 residues long: Very-long-chain enoyl-CoA reductase (308 aa).

The Cytoplasmic segment spans residues 1 to 86 (MKHYEVEILD…YFRDLGAQIS (86 aa)). Residue K22 is modified to N6-acetyllysine. S58 carries the phosphoserine modification. K60 is modified (N6-acetyllysine). The chain crosses the membrane as a helical span at residues 87–106 (WVTVFLTEYAGPLFIYLLFY). Topologically, residues 107–124 (FRVPFIYGHKYDFTSSRH) are lumenal. The chain crosses the membrane as a helical span at residues 125 to 147 (TVVHLACICHSFHYIKRLLETLF). The Cytoplasmic segment spans residues 148–158 (VHRFSHGTMPL). The chain crosses the membrane as a helical span at residues 159 to 180 (RNIFKNCTYYWGFAAWMAYYIN). Residues 181–189 (HPLYTPPTY) lie on the Lumenal side of the membrane. A helical transmembrane segment spans residues 190–216 (GAQQVKLALAIFVICQLGNFSIHMALR). The Cytoplasmic segment spans residues 217 to 245 (DLRPAGSKTRKIPYPTKNPFTWLFLLVSC). The chain crosses the membrane as a helical span at residues 246–262 (PNYTYEVGSWIGFAIMT). At 263–264 (QC) the chain is on the lumenal side. Residues 265 to 292 (LPVALFSLVGFTQMTIWAKGKHRSYLKE) traverse the membrane as a helical segment. The Cytoplasmic portion of the chain corresponds to 293–308 (FRDYPPLRMPIIPFLL).

The protein belongs to the steroid 5-alpha reductase family. As to quaternary structure, interacts with ELOVL1 and LASS2. Interacts with HACD1 and HACD2 (via the third lumenal loop), but not with HACD3 and HACD4. Interacts with ELOVL1, ELOVL2, ELOVL3, ELOVL5 and ELOVL7 in the presence of acyl-CoA; interaction with HACD1/2 and that with ELOVLs are mutually exclusive. Glycosylated. Expressed in most tissues tested. Highly expressed in skeletal muscle.

The protein localises to the endoplasmic reticulum membrane. The enzyme catalyses a very-long-chain 2,3-saturated fatty acyl-CoA + NADP(+) = a very-long-chain (2E)-enoyl-CoA + NADPH + H(+). It carries out the reaction octadecanoyl-CoA + NADP(+) = (2E)-octadecenoyl-CoA + NADPH + H(+). The catalysed reaction is (2E,7Z,10Z,13Z,16Z)-docosapentaenoyl-CoA + NADPH + H(+) = (7Z,10Z,13Z,16Z)-docosatetraenoyl-CoA + NADP(+). It catalyses the reaction (2E,7Z,10Z,13Z,16Z,19Z)-docosahexaenoyl-CoA + NADPH + H(+) = (7Z,10Z,13Z,16Z,19Z)-docosapentaenoyl-CoA + NADP(+). The enzyme catalyses (2E,8Z,11Z,14Z)-eicosatetraenoyl-CoA + NADPH + H(+) = (8Z,11Z,14Z)-eicosatrienoyl-CoA + NADP(+). It carries out the reaction (2E)-hexadecenoyl-CoA + NADPH + H(+) = hexadecanoyl-CoA + NADP(+). It participates in lipid metabolism; fatty acid biosynthesis. The protein operates within lipid metabolism; sphingolipid metabolism. In terms of biological role, involved in both the production of very long-chain fatty acids for sphingolipid synthesis and the degradation of the sphingosine moiety in sphingolipids through the sphingosine 1-phosphate metabolic pathway. Catalyzes the last of the four reactions of the long-chain fatty acids elongation cycle. This endoplasmic reticulum-bound enzymatic process, allows the addition of 2 carbons to the chain of long- and very long-chain fatty acids/VLCFAs per cycle. This enzyme reduces the trans-2,3-enoyl-CoA fatty acid intermediate to an acyl-CoA that can be further elongated by entering a new cycle of elongation. Thereby, it participates in the production of VLCFAs of different chain lengths that are involved in multiple biological processes as precursors of membrane lipids and lipid mediators. Catalyzes the saturation step of the sphingosine 1-phosphate metabolic pathway, the conversion of trans-2-hexadecenoyl-CoA to palmitoyl-CoA. The protein is Very-long-chain enoyl-CoA reductase (TECR) of Homo sapiens (Human).